The sequence spans 559 residues: 3-phosphoinositide-dependent protein kinase 1 (559 aa).

Position 9 is a phosphotyrosine; by SRC and INSR (Tyr-9). Ser-25 is subject to Phosphoserine. The interval 25 to 83 (SPSMVRSQTEPSSSPGIPSGVSRQGSTMDGTTAEARPSTNPLQQHPAQLPPQPRKKRPE) is disordered. Over residues 35 to 46 (PSSSPGIPSGVS) the composition is skewed to low complexity. The Protein kinase domain maps to 85–345 (FKFGKILGEG…YGPLKAHPFF (261 aa)). ATP-binding positions include 95–97 (SFS) and Lys-114. The PIF-pocket stretch occupies residues 116-160 (LEKRHIIKENKVPYVTRERDVMSRLDHPFFVKLYFTFQDDEKLYF). Residues 163-165 (SYA) and Glu-169 contribute to the ATP site. Asp-208 functions as the Proton acceptor in the catalytic mechanism. Residues Glu-212 and Asp-226 each coordinate ATP. Ser-244 carries the phosphoserine modification. Lys-307 bears the N6-acetyllysine mark. Thr-357 bears the Phosphothreonine; by MELK mark. Tyr-376 and Tyr-379 each carry phosphotyrosine; by SRC and INSR. At Ser-396 the chain carries Phosphoserine. A Phosphoserine; by MAP3K5 modification is found at Ser-397. Ser-399 is subject to Phosphoserine. At Ser-401 the chain carries Phosphoserine; by MAP3K5. Ser-413 carries the phosphoserine modification. Residues 462-553 (KMGPVDKRKG…EVWRQQYQSS (92 aa)) enclose the PH domain. Ser-504 carries the phosphoserine; by PKC/PRKCQ modification. At Thr-516 the chain carries Phosphothreonine; by autocatalysis. Residue Ser-532 is modified to Phosphoserine; by PKC/PRKCQ.

The protein belongs to the protein kinase superfamily. AGC Ser/Thr protein kinase family. PDPK1 subfamily. In terms of assembly, homodimer in its autoinhibited state. Active as monomer. Interacts with NPRL2, PPARG, PAK1, PTK2B, GRB14, PKN1 (via C-terminus), STRAP and IKKB. The Tyr-9 phosphorylated form interacts with SRC, RASA1 and CRK (via their SH2 domains). Interacts with SGK3 in a phosphorylation-dependent manner. The tyrosine-phosphorylated form interacts with PTPN6. The Ser-244 phosphorylated form interacts with YWHAH and YWHAQ. Binds INSR in response to insulin. Interacts (via PH domain) with SMAD3, SMAD4 and SMAD7. Interacts with PKN2; the interaction stimulates PDPK1 autophosphorylation, its PI(3,4,5)P3-dependent kinase activity toward 'Ser-473' of AKT1 but also activates its kinase activity toward PRKCD and PRKCZ. Post-translationally, phosphorylation on Ser-244 in the activation loop is required for full activity. PDPK1 itself can autophosphorylate Ser-244, leading to its own activation. Autophosphorylation is inhibited by the apoptotic C-terminus cleavage product of PKN2. Tyr-9 phosphorylation is critical for stabilization of both PDPK1 and the PDPK1/SRC complex via HSP90-mediated protection of PDPK1 degradation. Angiotensin II stimulates the tyrosine phosphorylation of PDPK1 in vascular smooth muscle in a calcium- and SRC-dependent manner. Phosphorylated on Tyr-9, Tyr-376 and Tyr-379 by INSR in response to insulin. Palmitate negatively regulates autophosphorylation at Ser-244 and palmitate-induced phosphorylation at Ser-532 and Ser-504 by PKC/PRKCQ negatively regulates its ability to phosphorylate PKB/AKT1. Phosphorylation at Thr-357 by MELK partially inhibits kinase activity, the inhibition is cooperatively enhanced by phosphorylation at Ser-397 and Ser-401 by MAP3K5. In terms of processing, monoubiquitinated in the kinase domain, deubiquitinated by USP4.

Its subcellular location is the cytoplasm. The protein localises to the nucleus. It is found in the cell membrane. It localises to the cell junction. The protein resides in the focal adhesion. The catalysed reaction is L-seryl-[protein] + ATP = O-phospho-L-seryl-[protein] + ADP + H(+). It catalyses the reaction L-threonyl-[protein] + ATP = O-phospho-L-threonyl-[protein] + ADP + H(+). Its activity is regulated as follows. Homodimerization regulates its activity by maintaining the kinase in an autoinhibitory conformation. NPRL2 down-regulates its activity by interfering with tyrosine phosphorylation at the Tyr-9, Tyr-376 and Tyr-379 residues. The 14-3-3 protein YWHAQ acts as a negative regulator by association with the residues surrounding the Ser-244 residue. STRAP positively regulates its activity by enhancing its autophosphorylation and by stimulating its dissociation from YWHAQ. SMAD2, SMAD3, SMAD4 and SMAD7 also positively regulate its activity by stimulating its dissociation from YWHAQ. Activated by phosphorylation on Tyr-9, Tyr-376 and Tyr-379 by INSR in response to insulin. In terms of biological role, serine/threonine kinase which acts as a master kinase, phosphorylating and activating a subgroup of the AGC family of protein kinases. Its targets include: protein kinase B (PKB/AKT1, PKB/AKT2, PKB/AKT3), p70 ribosomal protein S6 kinase (RPS6KB1), p90 ribosomal protein S6 kinase (RPS6KA1, RPS6KA2 and RPS6KA3), cyclic AMP-dependent protein kinase (PRKACA), protein kinase C (PRKCD and PRKCZ), serum and glucocorticoid-inducible kinase (SGK1, SGK2 and SGK3), p21-activated kinase-1 (PAK1), TSSK3, protein kinase PKN (PKN1 and PKN2). Plays a central role in the transduction of signals from insulin by providing the activating phosphorylation to PKB/AKT1, thus propagating the signal to downstream targets controlling cell proliferation and survival, as well as glucose and amino acid uptake and storage. Negatively regulates the TGF-beta-induced signaling by: modulating the association of SMAD3 and SMAD7 with TGF-beta receptor, phosphorylating SMAD2, SMAD3, SMAD4 and SMAD7, preventing the nuclear translocation of SMAD3 and SMAD4 and the translocation of SMAD7 from the nucleus to the cytoplasm in response to TGF-beta. Activates PPARG transcriptional activity and promotes adipocyte differentiation. Activates the NF-kappa-B pathway via phosphorylation of IKKB. The tyrosine phosphorylated form is crucial for the regulation of focal adhesions by angiotensin II. Controls proliferation, survival, and growth of developing pancreatic cells. Participates in the regulation of Ca(2+) entry and Ca(2+)-activated K(+) channels of mast cells. Essential for the motility of vascular endothelial cells (ECs) and is involved in the regulation of their chemotaxis. Plays a critical role in cardiac homeostasis by serving as a dual effector for cell survival and beta-adrenergic response. Plays an important role during thymocyte development by regulating the expression of key nutrient receptors on the surface of pre-T cells and mediating Notch-induced cell growth and proliferative responses. Provides negative feedback inhibition to toll-like receptor-mediated NF-kappa-B activation in macrophages. This chain is 3-phosphoinositide-dependent protein kinase 1 (Pdpk1), found in Rattus norvegicus (Rat).